We begin with the raw amino-acid sequence, 119 residues long: Large ribosomal subunit protein bL20 (119 aa).

It belongs to the bacterial ribosomal protein bL20 family.

Binds directly to 23S ribosomal RNA and is necessary for the in vitro assembly process of the 50S ribosomal subunit. It is not involved in the protein synthesizing functions of that subunit. The polypeptide is Large ribosomal subunit protein bL20 (Rhodopseudomonas palustris (strain HaA2)).